Reading from the N-terminus, the 77-residue chain is Exodeoxyribonuclease 7 small subunit (77 aa).

The protein belongs to the XseB family. Heterooligomer composed of large and small subunits.

It localises to the cytoplasm. It carries out the reaction Exonucleolytic cleavage in either 5'- to 3'- or 3'- to 5'-direction to yield nucleoside 5'-phosphates.. Bidirectionally degrades single-stranded DNA into large acid-insoluble oligonucleotides, which are then degraded further into small acid-soluble oligonucleotides. The chain is Exodeoxyribonuclease 7 small subunit from Alkaliphilus oremlandii (strain OhILAs) (Clostridium oremlandii (strain OhILAs)).